The sequence spans 1792 residues: D-lysergyl-peptide-synthetase subunit 3 (1792 aa).

Residues 239–642 (FRQRCDLHPN…GRKDSQIKIR (404 aa)) are adenylation (A) domain. One can recognise a Carrier domain in the interval 779-853 (SNEEHRLQRM…DLARKASQSV (75 aa)). Ser813 carries the post-translational modification O-(pantetheine 4'-phosphoryl)serine. The tract at residues 895–1285 (EDIYPCTPMQ…HILGQIHGKE (391 aa)) is condensation (C) domain. Positions 1415-1640 (VTGANGFIGT…AGEFNSSAGS (226 aa)) are reductase (R) domain.

This sequence belongs to the NRP synthetase family.

It participates in alkaloid biosynthesis; ergot alkaloid biosynthesis. D-lysergyl-peptide-synthetase subunit 3; part of the gene cluster that mediates the biosynthesis of fungal ergot alkaloid. DmaW catalyzes the first step of ergot alkaloid biosynthesis by condensing dimethylallyl diphosphate (DMAP) and tryptophan to form 4-dimethylallyl-L-tryptophan. The second step is catalyzed by the methyltransferase easF that methylates 4-dimethylallyl-L-tryptophan in the presence of S-adenosyl-L-methionine, resulting in the formation of 4-dimethylallyl-L-abrine. The catalase easC and the FAD-dependent oxidoreductase easE then transform 4-dimethylallyl-L-abrine to chanoclavine-I which is further oxidized by easD in the presence of NAD(+), resulting in the formation of chanoclavine-I aldehyde. Agroclavine dehydrogenase easG then mediates the conversion of chanoclavine-I aldehyde to agroclavine via a non-enzymatic adduct reaction: the substrate is an iminium intermediate that is formed spontaneously from chanoclavine-I aldehyde in the presence of glutathione. The presence of easA is not required to complete this reaction. Further conversion of agroclavine to paspalic acid is a two-step process involving oxidation of agroclavine to elymoclavine and of elymoclavine to paspalic acid, the second step being performed by the elymoclavine oxidase cloA. Paspalic acid is then further converted to D-lysergic acid. Ergopeptines are assembled from D-lysergic acid and three different amino acids by the D-lysergyl-peptide-synthetases composed each of a monomudular and a trimodular nonribosomal peptide synthetase subunit. LpsB and lpsC encode the monomodular subunits responsible for D-lysergic acid activation and incorporation into the ergopeptine backbone. LpsA1 and A2 subunits encode the trimodular nonribosomal peptide synthetase assembling the tripeptide portion of ergopeptines. LpsA1 is responsible for formation of the major ergopeptine, ergotamine, and lpsA2 for alpha-ergocryptine, the minor ergopeptine of the total alkaloid mixture elaborated by C.purpurea. D-lysergyl-tripeptides are assembled by the nonribosomal peptide synthetases and released as N-(D-lysergyl-aminoacyl)-lactams. Cyclolization of the D-lysergyl-tripeptides is performed by the Fe(2+)/2-ketoglutarate-dependent dioxygenase easH which introduces a hydroxyl group into N-(D-lysergyl-aminoacyl)-lactam at alpha-C of the aminoacyl residue followed by spontaneous condensation with the terminal lactam carbonyl group. The polypeptide is D-lysergyl-peptide-synthetase subunit 3 (Claviceps purpurea (strain 20.1) (Ergot fungus)).